Here is a 104-residue protein sequence, read N- to C-terminus: NADH-quinone oxidoreductase subunit K (104 aa).

3 helical membrane passes run 4 to 24, 31 to 51, and 67 to 87; these read VPAS…LFGA, VIVL…LVAF, and LFTM…LIAL.

It belongs to the complex I subunit 4L family. In terms of assembly, NDH-1 is composed of 14 different subunits. Subunits NuoA, H, J, K, L, M, N constitute the membrane sector of the complex.

The protein resides in the cell membrane. The catalysed reaction is a quinone + NADH + 5 H(+)(in) = a quinol + NAD(+) + 4 H(+)(out). Functionally, NDH-1 shuttles electrons from NADH, via FMN and iron-sulfur (Fe-S) centers, to quinones in the respiratory chain. The immediate electron acceptor for the enzyme in this species is believed to be a menaquinone. Couples the redox reaction to proton translocation (for every two electrons transferred, four hydrogen ions are translocated across the cytoplasmic membrane), and thus conserves the redox energy in a proton gradient. In Bacillus cereus (strain ATCC 14579 / DSM 31 / CCUG 7414 / JCM 2152 / NBRC 15305 / NCIMB 9373 / NCTC 2599 / NRRL B-3711), this protein is NADH-quinone oxidoreductase subunit K.